We begin with the raw amino-acid sequence, 286 residues long: Phosphatidylserine decarboxylase proenzyme (286 aa).

Residues D90, H147, and S253 each act as charge relay system; for autoendoproteolytic cleavage activity in the active site. S253 (schiff-base intermediate with substrate; via pyruvic acid; for decarboxylase activity) is an active-site residue. S253 is subject to Pyruvic acid (Ser); by autocatalysis.

This sequence belongs to the phosphatidylserine decarboxylase family. PSD-B subfamily. Prokaryotic type I sub-subfamily. In terms of assembly, heterodimer of a large membrane-associated beta subunit and a small pyruvoyl-containing alpha subunit. Requires pyruvate as cofactor. Post-translationally, is synthesized initially as an inactive proenzyme. Formation of the active enzyme involves a self-maturation process in which the active site pyruvoyl group is generated from an internal serine residue via an autocatalytic post-translational modification. Two non-identical subunits are generated from the proenzyme in this reaction, and the pyruvate is formed at the N-terminus of the alpha chain, which is derived from the carboxyl end of the proenzyme. The autoendoproteolytic cleavage occurs by a canonical serine protease mechanism, in which the side chain hydroxyl group of the serine supplies its oxygen atom to form the C-terminus of the beta chain, while the remainder of the serine residue undergoes an oxidative deamination to produce ammonia and the pyruvoyl prosthetic group on the alpha chain. During this reaction, the Ser that is part of the protease active site of the proenzyme becomes the pyruvoyl prosthetic group, which constitutes an essential element of the active site of the mature decarboxylase.

It is found in the cell membrane. It catalyses the reaction a 1,2-diacyl-sn-glycero-3-phospho-L-serine + H(+) = a 1,2-diacyl-sn-glycero-3-phosphoethanolamine + CO2. It functions in the pathway phospholipid metabolism; phosphatidylethanolamine biosynthesis; phosphatidylethanolamine from CDP-diacylglycerol: step 2/2. Its function is as follows. Catalyzes the formation of phosphatidylethanolamine (PtdEtn) from phosphatidylserine (PtdSer). The protein is Phosphatidylserine decarboxylase proenzyme of Pseudoalteromonas atlantica (strain T6c / ATCC BAA-1087).